The chain runs to 520 residues: Peptidoglycan-recognition protein LC (520 aa).

Polar residues-rich tracts occupy residues 1–14 (MPFSNETEMSQCSN) and 27–36 (KNCSTSSTDS). Disordered regions lie at residues 1–78 (MPFS…RISV) and 239–278 (DKWKPGEGPAGGQDNPAFNGGPSTNGSAPGSKHEDPAQTP). The Cytoplasmic portion of the chain corresponds to 1–291 (MPFSNETEMS…PFLPNTVGRK (291 aa)). Composition is skewed to basic and acidic residues over residues 48 to 58 (RPEKETKDRGT) and 66 to 78 (KSEEKTESKRISV). A helical; Signal-anchor for type II membrane protein membrane pass occupies residues 292-312 (AVTVTVVFVTLTFLLGIVLAT). Residues 313–520 (TTNLFGKTLN…ASFANWTHWS (208 aa)) lie on the Extracellular side of the membrane. The N-linked (GlcNAc...) asparagine glycan is linked to N389. A disulfide bridge links C390 with C396. The N-acetylmuramoyl-L-alanine amidase domain occupies 412–490 (QKCDIAYNFL…KLGKIAPSYR (79 aa)). N515 carries an N-linked (GlcNAc...) asparagine glycan.

It belongs to the N-acetylmuramoyl-L-alanine amidase 2 family. In terms of processing, proteolytically cleaved, probably by a metaloprotease such as Mmp2; proteolytic cleavage leads to activation of the imd/Relish signaling pathway. As to expression, expressed in the fat body and hemocytes.

The protein resides in the membrane. Activated by proteolytic cleavage in response to Gram-negative bacterial infection; cleavage may be mediated by endogenous proteases, such as the metalloprotease Mmp2 or elastase, or by bacterially expressed proteases such as the surface serine protease OmpT. Its function is as follows. Major activator of the imd/Relish pathway and is likely to encode a pattern recognition molecule for the humoral immune response. Required for Relish processing and nuclear translocation following proteolytic cleavage. Involved in the response to lipopolysaccharide (LPS) and peptidoglycan of Gram-negative bacteria. The different isoforms probably display different recognition capabilities to various microbial patterns. In terms of biological role, mediates the response to LPS and Gram-negative bacteria. Functionally, mediates the response to LPS, peptidoglycan and Gram-negative bacteria. The polypeptide is Peptidoglycan-recognition protein LC (PGRP-LC) (Drosophila melanogaster (Fruit fly)).